We begin with the raw amino-acid sequence, 830 residues long: Cyclin-dependent kinase inhibitor FAR1 (830 aa).

Residues 1 to 31 (MKTPTRVSFEKKIHTPPSGDRDAERSPPKKF) are disordered. Residues 8–27 (SFEKKIHTPPSGDRDAERSP) are compositionally biased toward basic and acidic residues. S87 carries the phosphoserine; by CDC28 modification. Residues S110 and S114 each carry the phosphoserine modification. Residues 202–252 (CLICEESISSTFTGEKVVESTCSHTSHYNCYLMLFETLYFQGKFPECKICG) form an RING-type zinc finger. Phosphothreonine is present on T306.

As to quaternary structure, associates with the CDC28-CLN complex. In terms of processing, thought to be phosphorylated by MAP kinase FUS3. Thought to enhance the binding of FAR1 to G1-specific cyclin-dependent kinase (CDK) complexes.

Inhibitor of the cyclin-dependent kinase CDC28. Necessary for cell cycle arrest. Involved in pheromone response. Contributes to mating efficiency. Required for oriented polarization of yeast cells in response to mating pheromones. In Saccharomyces cerevisiae (strain ATCC 204508 / S288c) (Baker's yeast), this protein is Cyclin-dependent kinase inhibitor FAR1 (FAR1).